A 98-amino-acid polypeptide reads, in one-letter code: MASRFMTDPHAMRDMAGRFEVHAQTVEDEARRMWASAQNISGAGWSGMAEATSLDTMTQMNQAFRNIVNMLHGVRDGLVRDANNYEQQEQASQQILSS.

This sequence belongs to the WXG100 family. CFP-10 subfamily.

It is found in the secreted. In Mycobacterium bovis (strain ATCC BAA-935 / AF2122/97), this protein is ESAT-6-like protein EsxJ.